The following is a 460-amino-acid chain: Vitamin K-dependent protein C (460 aa).

A signal peptide spans 1 to 18 (MWQFRVFLLLMSTWGISS). Positions 19–41 (IPAHPDPVFSSSEHAHQVLRVRR) are excised as a propeptide. A Gla domain is found at 42–87 (ANSFLEEMRPGSLERECMEEICDFEEAQEIFQNVEDTLAFWIKYFD). A 4-carboxyglutamate mark is found at E47, E48, E55, E57, E60, E61, E66, E67, E70, and E76. C58 and C63 are joined by a disulfide. Cystine bridges form between C91–C110, C100–C105, C104–C119, C121–C130, C139–C150, C146–C159, C161–C174, C182–C319, and C238–C254. EGF-like domains follow at residues 96–131 (LDHQ…KFCQ) and 135–175 (RFQD…MRCK). D112 is modified ((3R)-3-hydroxyaspartate). The region spanning 213–449 (VNGTLTKQGD…YLKWIHSYIG (237 aa)) is the Peptidase S1 domain. N214 is a glycosylation site (N-linked (GlcNAc...) asparagine). H253 functions as the Charge relay system in the catalytic mechanism. A glycan (N-linked (GlcNAc...) asparagine) is linked at N290. The active-site Charge relay system is the D299. A glycan (N-linked (GlcNAc...) asparagine) is linked at N354. Cystine bridges form between C372–C386 and C397–C425. S401 (charge relay system) is an active-site residue.

It belongs to the peptidase S1 family. In terms of assembly, synthesized as a single chain precursor, which is cleaved into a light chain and a heavy chain held together by a disulfide bond. The enzyme is then activated by thrombin, which cleaves a tetradecapeptide from the amino end of the heavy chain; this reaction, which occurs at the surface of endothelial cells, is strongly promoted by thrombomodulin. The vitamin K-dependent, enzymatic carboxylation of some Glu residues allows the modified protein to bind calcium. In terms of processing, the iron and 2-oxoglutarate dependent 3-hydroxylation of aspartate and asparagine is (R) stereospecific within EGF domains. Plasma; synthesized in the liver.

It localises to the secreted. The protein resides in the golgi apparatus. Its subcellular location is the endoplasmic reticulum. It catalyses the reaction Degradation of blood coagulation factors Va and VIIIa.. Its function is as follows. Protein C is a vitamin K-dependent serine protease that regulates blood coagulation by inactivating factors Va and VIIIa in the presence of calcium ions and phospholipids. Exerts a protective effect on the endothelial cell barrier function. The chain is Vitamin K-dependent protein C (Proc) from Mus musculus (Mouse).